Consider the following 543-residue polypeptide: MTATPARRTSLASPATKPVAGGLALAFLATLAGGALLALALEAGGGGFDAAANFDTYLWRVARFTIWQAVASSLLSVLFAIPIARALYAEARFPGRGLILRLFAQPLALPALVAVLGVTSIYGRNGLIAHISDMLGHPMQPDIYGIAGILIAHIFFNMPLAVRLLLAAYESIPDDHWKLAAQLGMGSRARFRLIDWPVIRRSLPGMIGLVFMLCVTSFTTVLTLGGGPRATTLEVAIYQSLHFDFDPARAVALTFTQLALTLLILLILRLTGRPSEEGFTQTATPRRYGSPRKTERLFNIIVIALGFLYVALPIAGVVVSGLTADLVRLLSERIVWHAIATSLALGFSAALLAVFLSLALVAAREATRNARIANIFDTGASLILVMPPIVIGAGWFILLRHFTDPFVMAPLMVVTVNAAMAMPFAVRLLRPAWDTAASRHNKLCSQLGIKGFNRLRLIDWPSIRRPCGMAFAFAMALSLGDLGTIALFGSDALVTLPYLLLQRMGSYRTFDAAGLALILGVLCLALMMIADRAAASRKEAFLQ.

12 helical membrane-spanning segments follow: residues 19-39 (VAGG…LLAL), 64-84 (FTIW…IPIA), 102-122 (LFAQ…TSIY), 142-162 (DIYG…PLAV), 205-225 (GMIG…LTLG), 250-270 (AVAL…ILRL), 300-320 (IIVI…VVVS), 343-363 (LALG…LVAA), 379-399 (GASL…FILL), 406-426 (FVMA…PFAV), 468-488 (GMAF…IALF), and 510-530 (FDAA…MMIA). Residues 62 to 266 (ARFTIWQAVA…QLALTLLILL (205 aa)) enclose the ABC transmembrane type-1 1 domain. Residues 339 to 530 (IATSLALGFS…VLCLALMMIA (192 aa)) enclose the ABC transmembrane type-1 2 domain.

This sequence belongs to the binding-protein-dependent transport system permease family. CysTW subfamily. As to quaternary structure, the complex is composed of two ATP-binding proteins (ThiQ), two transmembrane proteins (ThiP) and a solute-binding protein (ThiB).

The protein resides in the cell inner membrane. Its function is as follows. Part of the ABC transporter complex ThiBPQ involved in thiamine import. Probably responsible for the translocation of the substrate across the membrane. This chain is Thiamine transport system permease protein ThiP (thiP), found in Brucella melitensis biotype 1 (strain ATCC 23456 / CCUG 17765 / NCTC 10094 / 16M).